A 514-amino-acid chain; its full sequence is RNA-binding region-containing protein 3 (514 aa).

The segment at 1 to 26 is disordered; the sequence is MAGPEPPMPLSRGGPGSASLSPPRGD. Phosphoserine is present on S21. In terms of domain architecture, RRM 1 spans 27–102; the sequence is RTLLVRHLPA…HTLVVEFAKE (76 aa). Disordered regions lie at residues 106 to 133, 213 to 282, and 337 to 363; these read VHSP…EKKE, MPLH…VRKK, and ETQP…FGKI. Residue S108 is modified to Phosphoserine. A compositionally biased stretch (basic and acidic residues) spans 115-133; the sequence is TEKKKRLDDTVENDKEKKE. Residues 217-230 are compositionally biased toward pro residues; the sequence is APLPPTSPQPPEEP. A Phosphoserine modification is found at S349. Residues 418–501 form the RRM 2 domain; that stretch reads CRIYVKNLAR…KPMVVQFARS (84 aa).

As to quaternary structure, component of the U11/U12 snRNPs that are part of the U12-type spliceosome. Found in a complex with m(7)G-capped U12 snRNA. Interacts with PDCD7.

The protein localises to the nucleus. Participates in pre-mRNA U12-dependent splicing, performed by the minor spliceosome which removes U12-type introns. U12-type introns comprises less than 1% of all non-coding sequences. Binds to the 3'-stem-loop of m(7)G-capped U12 snRNA. This is RNA-binding region-containing protein 3 (Rnpc3) from Mus musculus (Mouse).